We begin with the raw amino-acid sequence, 303 residues long: Putative fimbrium subunit Fim1C (303 aa).

The first 22 residues, methionine 1 to aspartate 22, serve as a signal peptide directing secretion.

The protein belongs to the bacteroidetes fimbrillin superfamily. Mfa-like family. In terms of assembly, may be part of the fimbrial tip.

It localises to the fimbrium. Putative component of the fimbrium tip. Fimbriae are filamentous appendages on the cell surface that mediate cell adhesion and biofilm formation. The chain is Putative fimbrium subunit Fim1C (fim1C) from Bacteroides uniformis (strain ATCC 8492 / DSM 6597 / CCUG 4942 / CIP 103695 / JCM 5828 / KCTC 5204 / NCTC 13054 / VPI 0061).